We begin with the raw amino-acid sequence, 693 residues long: Homeobox protein caupolican (693 aa).

6 disordered regions span residues 20-104 (TANT…PSRG), 288-331 (NKMT…PGNQ), 387-453 (AQSH…DCGI), 480-538 (YLGQ…PLSM), 561-627 (MHLP…SMHS), and 648-693 (YGHG…RSGS). Low complexity predominate over residues 41-59 (ASLSPSGGSTATGLTAGPL). Positions 226–288 (LAARRKNATR…NARRRLKKEN (63 aa)) form a DNA-binding region, homeobox; TALE-type. Composition is skewed to basic and acidic residues over residues 288-298 (NKMTWEPKNKT) and 308-317 (DDEKEKDAGD). 2 stretches are compositionally biased toward low complexity: residues 397–419 (HPQQMQHHQQQQQQQQNQQQLQH) and 493–515 (QQLPHQPLQQHQQQQLQQLQQQQ). Basic residues predominate over residues 516–527 (QHHHHPHHHHPH). Over residues 609 to 627 (SSGGSSSSSGSSHSSSMHS) the composition is skewed to low complexity. Residues 651-675 (GHSHGHGHGHGHGLGHGHGLGHGHG) show a composition bias toward basic residues.

It belongs to the TALE/IRO homeobox family.

It localises to the nucleus. Controls proneural and vein forming genes. Positive transcriptional controller of ac-sc (achaete-scute). May act as an activator that interacts with the transcriptional complex assembled on the ac and sc promoters and participates in transcription initiation. This chain is Homeobox protein caupolican (caup), found in Drosophila melanogaster (Fruit fly).